A 266-amino-acid chain; its full sequence is Shikimate dehydrogenase (NADP(+)) (266 aa).

Residues 16-18 and T65 each bind shikimate; that span reads SKS. The active-site Proton acceptor is K69. Shikimate contacts are provided by N90 and D105. NADP(+) contacts are provided by residues 128 to 132 and L211; that span reads GAGGS. Y213 contributes to the shikimate binding site. Residue G233 coordinates NADP(+).

Belongs to the shikimate dehydrogenase family. Homodimer.

The enzyme catalyses shikimate + NADP(+) = 3-dehydroshikimate + NADPH + H(+). The protein operates within metabolic intermediate biosynthesis; chorismate biosynthesis; chorismate from D-erythrose 4-phosphate and phosphoenolpyruvate: step 4/7. Involved in the biosynthesis of the chorismate, which leads to the biosynthesis of aromatic amino acids. Catalyzes the reversible NADPH linked reduction of 3-dehydroshikimate (DHSA) to yield shikimate (SA). In Helicobacter pylori (strain J99 / ATCC 700824) (Campylobacter pylori J99), this protein is Shikimate dehydrogenase (NADP(+)).